The sequence spans 391 residues: 3-ketoacyl-CoA thiolase (391 aa).

Catalysis depends on Cys95, which acts as the Acyl-thioester intermediate. Residues His347 and Cys377 each act as proton acceptor in the active site.

It belongs to the thiolase-like superfamily. Thiolase family. In terms of assembly, heterotetramer of two alpha chains (FadB) and two beta chains (FadA).

The protein localises to the cytoplasm. It carries out the reaction an acyl-CoA + acetyl-CoA = a 3-oxoacyl-CoA + CoA. It functions in the pathway lipid metabolism; fatty acid beta-oxidation. Its function is as follows. Catalyzes the final step of fatty acid oxidation in which acetyl-CoA is released and the CoA ester of a fatty acid two carbons shorter is formed. In Pseudomonas aeruginosa (strain ATCC 15692 / DSM 22644 / CIP 104116 / JCM 14847 / LMG 12228 / 1C / PRS 101 / PAO1), this protein is 3-ketoacyl-CoA thiolase.